An 82-amino-acid polypeptide reads, in one-letter code: Beta-defensin 119 (82 aa).

An N-terminal signal peptide occupies residues 1-19; it reads MKFFLFFVILLAMEPVISG. Disulfide bonds link Cys-26-Cys-53, Cys-33-Cys-47, and Cys-37-Cys-54.

Belongs to the beta-defensin family.

The protein resides in the secreted. Its function is as follows. Has antibacterial activity. In Canis lupus familiaris (Dog), this protein is Beta-defensin 119 (DEFB119).